The following is a 132-amino-acid chain: Fatty acid-binding protein 1 (132 aa).

Position 2 is an N-acetylalanine (Ala-2).

The protein belongs to the calycin superfamily. Fatty-acid binding protein (FABP) family.

The chain is Fatty acid-binding protein 1 (FABP-1) from Fasciola gigantica (Giant liver fluke).